The sequence spans 172 residues: Capsid protein (172 aa).

The tract at residues 1–26 (MASKWNWSGTKGRRTPRRPYGRPYKS) is disordered. The segment covering 11 to 20 (KGRRTPRRPY) has biased composition (basic residues).

It belongs to the nanoviridae capsid protein family.

Its subcellular location is the virion. In Faba bean necrotic yellows virus (isolate Egyptian EV1-93) (FBNYV), this protein is Capsid protein (DNA-S).